Consider the following 429-residue polypeptide: Bifunctional protein GlmU (429 aa).

The tract at residues 1–223 (MKTSILILAA…EDEFMGINDK (223 aa)) is pyrophosphorylase. UDP-N-acetyl-alpha-D-glucosamine-binding positions include 8 to 11 (LAAG), Lys22, and 81 to 82 (GT). Asp102 serves as a coordination point for Mg(2+). 4 residues coordinate UDP-N-acetyl-alpha-D-glucosamine: Gly135, Glu149, Asn164, and Asn221. Mg(2+) is bound at residue Asn221. The interval 224–244 (FELSIAENFMQEKIKKYWMQQ) is linker. The tract at residues 245 to 429 (GVIFHLPQST…KDYYYKKFQK (185 aa)) is N-acetyltransferase. Residues Arg308 and Lys325 each contribute to the UDP-N-acetyl-alpha-D-glucosamine site. The Proton acceptor role is filled by His336. Tyr339 and Asn350 together coordinate UDP-N-acetyl-alpha-D-glucosamine. Acetyl-CoA is bound by residues 359–360 (NY), Ser378, Ala396, and Arg413.

In the N-terminal section; belongs to the N-acetylglucosamine-1-phosphate uridyltransferase family. This sequence in the C-terminal section; belongs to the transferase hexapeptide repeat family. As to quaternary structure, homotrimer. Requires Mg(2+) as cofactor.

It localises to the cytoplasm. It catalyses the reaction alpha-D-glucosamine 1-phosphate + acetyl-CoA = N-acetyl-alpha-D-glucosamine 1-phosphate + CoA + H(+). It carries out the reaction N-acetyl-alpha-D-glucosamine 1-phosphate + UTP + H(+) = UDP-N-acetyl-alpha-D-glucosamine + diphosphate. It participates in nucleotide-sugar biosynthesis; UDP-N-acetyl-alpha-D-glucosamine biosynthesis; N-acetyl-alpha-D-glucosamine 1-phosphate from alpha-D-glucosamine 6-phosphate (route II): step 2/2. It functions in the pathway nucleotide-sugar biosynthesis; UDP-N-acetyl-alpha-D-glucosamine biosynthesis; UDP-N-acetyl-alpha-D-glucosamine from N-acetyl-alpha-D-glucosamine 1-phosphate: step 1/1. The protein operates within bacterial outer membrane biogenesis; LPS lipid A biosynthesis. In terms of biological role, catalyzes the last two sequential reactions in the de novo biosynthetic pathway for UDP-N-acetylglucosamine (UDP-GlcNAc). The C-terminal domain catalyzes the transfer of acetyl group from acetyl coenzyme A to glucosamine-1-phosphate (GlcN-1-P) to produce N-acetylglucosamine-1-phosphate (GlcNAc-1-P), which is converted into UDP-GlcNAc by the transfer of uridine 5-monophosphate (from uridine 5-triphosphate), a reaction catalyzed by the N-terminal domain. The protein is Bifunctional protein GlmU of Campylobacter jejuni subsp. jejuni serotype O:6 (strain 81116 / NCTC 11828).